The chain runs to 126 residues: MPEPVKSVPAPKKGSKKAVTKAQKKDGKKRKRSRKESYSVYVYKVLKQVHPDTGISSKAMGIMNSFVNDIFERIASEASRLAHYNKRSTITSREIQTAVRLLLPGELAKHAVSEGTKAVTKYTSSK.

The interval Met-1–Glu-36 is disordered. Position 2 is an N-acetylproline (Pro-2). Residue Glu-3 is modified to ADP-ribosyl glutamic acid. The residue at position 6 (Lys-6) is an N6-(2-hydroxyisobutyryl)lysine; alternate. Residue Lys-6 is modified to N6-(beta-hydroxybutyryl)lysine; alternate. Lys-6 carries the N6-acetyllysine; alternate modification. Lys-6 is modified (N6-butyryllysine; alternate). Lys-6 is modified (N6-crotonyllysine; alternate). Residue Lys-6 is modified to N6-lactoyllysine; alternate. Lys-6 participates in a covalent cross-link: Glycyl lysine isopeptide (Lys-Gly) (interchain with G-Cter in SUMO2); alternate. Ser-7 carries the post-translational modification ADP-ribosylserine. The residue at position 12 (Lys-12) is an N6-(beta-hydroxybutyryl)lysine; alternate. N6-acetyllysine; alternate is present on residues Lys-12 and Lys-13. N6-crotonyllysine; alternate occurs at positions 12 and 13. Position 12 is an N6-lactoyllysine; alternate (Lys-12). N6-(2-hydroxyisobutyryl)lysine; alternate is present on Lys-13. Ser-15 carries the post-translational modification Phosphoserine; by STK4/MST1. Residues Lys-16, Lys-17, Lys-21, and Lys-24 each carry the N6-acetyllysine; alternate modification. Lys-16, Lys-17, Lys-21, and Lys-24 each carry N6-crotonyllysine; alternate. N6-lactoyllysine; alternate occurs at positions 16, 17, 21, and 24. At Lys-17 the chain carries N6-glutaryllysine; alternate. An N6-(2-hydroxyisobutyryl)lysine; alternate mark is found at Lys-21 and Lys-24. Lys-21 is subject to N6-(beta-hydroxybutyryl)lysine; alternate. Lys-21 carries the N6-butyryllysine; alternate modification. Lys-21 participates in a covalent cross-link: Glycyl lysine isopeptide (Lys-Gly) (interchain with G-Cter in SUMO2); alternate. Lys-25 is modified (N6-(2-hydroxyisobutyryl)lysine). Residue Lys-35 is modified to N6-(2-hydroxyisobutyryl)lysine; alternate. Lys-35 carries the N6-(beta-hydroxybutyryl)lysine; alternate modification. Lys-35 is subject to N6-crotonyllysine; alternate. Lys-35 is subject to N6-glutaryllysine; alternate. The residue at position 35 (Lys-35) is an N6-succinyllysine; alternate. Residue Lys-35 forms a Glycyl lysine isopeptide (Lys-Gly) (interchain with G-Cter in ubiquitin); alternate linkage. Position 36 is a polyADP-ribosyl glutamic acid (Glu-36). Ser-37 is subject to Phosphoserine; by AMPK. 3 positions are modified to N6-(2-hydroxyisobutyryl)lysine; alternate: Lys-44, Lys-47, and Lys-58. Lys-44 carries the N6-lactoyllysine; alternate modification. 2 positions are modified to N6-glutaryllysine; alternate: Lys-44 and Lys-47. Residue Lys-47 is modified to N6-methyllysine; alternate. Lys-58 is subject to N6,N6-dimethyllysine; alternate. Position 80 is a dimethylated arginine (Arg-80). Lys-86 carries the post-translational modification N6-(2-hydroxyisobutyryl)lysine; alternate. An N6-acetyllysine; alternate modification is found at Lys-86. At Lys-86 the chain carries N6-lactoyllysine; alternate. Lys-86 is modified (N6,N6,N6-trimethyllysine; alternate). Residues Arg-87 and Arg-93 each carry the omega-N-methylarginine modification. Lys-109 is subject to N6-(2-hydroxyisobutyryl)lysine; alternate. Position 109 is an N6-(beta-hydroxybutyryl)lysine; alternate (Lys-109). Lys-109 carries the post-translational modification N6-lactoyllysine; alternate. Lys-109 is subject to N6-glutaryllysine; alternate. Lys-109 bears the N6-methyllysine; alternate mark. A glycan (O-linked (GlcNAc) serine) is linked at Ser-113. Residue Thr-116 is modified to Phosphothreonine. An N6-(2-hydroxyisobutyryl)lysine; alternate mark is found at Lys-117 and Lys-121. Lys-117 carries the post-translational modification N6-(beta-hydroxybutyryl)lysine; alternate. 2 positions are modified to N6-lactoyllysine; alternate: Lys-117 and Lys-121. 2 positions are modified to N6-glutaryllysine; alternate: Lys-117 and Lys-121. N6-succinyllysine; alternate is present on residues Lys-117 and Lys-121. Lys-117 is subject to N6-methylated lysine; alternate. Lys-121 participates in a covalent cross-link: Glycyl lysine isopeptide (Lys-Gly) (interchain with G-Cter in ubiquitin); alternate.

The protein belongs to the histone H2B family. As to quaternary structure, the nucleosome is a histone octamer containing two molecules each of H2A, H2B, H3 and H4 assembled in one H3-H4 heterotetramer and two H2A-H2B heterodimers. The octamer wraps approximately 147 bp of DNA. Post-translationally, monoubiquitination at Lys-35 (H2BK34Ub) by the MSL1/MSL2 dimer is required for histone H3 'Lys-4' (H3K4me) and 'Lys-79' (H3K79me) methylation and transcription activation at specific gene loci, such as HOXA9 and MEIS1 loci. Similarly, monoubiquitination at Lys-121 (H2BK120Ub) by the RNF20/40 complex gives a specific tag for epigenetic transcriptional activation and is also prerequisite for histone H3 'Lys-4' and 'Lys-79' methylation. It also functions cooperatively with the FACT dimer to stimulate elongation by RNA polymerase II. H2BK120Ub also acts as a regulator of mRNA splicing: deubiquitination by USP49 is required for efficient cotranscriptional splicing of a large set of exons. Phosphorylated on Ser-15 (H2BS14ph) by STK4/MST1 during apoptosis; which facilitates apoptotic chromatin condensation. Also phosphorylated on Ser-15 in response to DNA double strand breaks (DSBs), and in correlation with somatic hypermutation and immunoglobulin class-switch recombination. Phosphorylation at Ser-37 (H2BS36ph) by AMPK in response to stress promotes transcription. In terms of processing, glcNAcylation at Ser-113 promotes monoubiquitination of Lys-121. It fluctuates in response to extracellular glucose, and associates with transcribed genes. Post-translationally, ADP-ribosylated by PARP1 or PARP2 on Ser-7 (H2BS6ADPr) in response to DNA damage. H2BS6ADPr promotes recruitment of CHD1L. Mono-ADP-ribosylated on Glu-3 (H2BE2ADPr) by PARP3 in response to single-strand breaks. Poly ADP-ribosylation on Glu-36 (H2BE35ADPr) by PARP1 regulates adipogenesis: it inhibits phosphorylation at Ser-37 (H2BS36ph), thereby blocking expression of pro-adipogenetic genes. Crotonylation (Kcr) is specifically present in male germ cells and marks testis-specific genes in post-meiotic cells, including X-linked genes that escape sex chromosome inactivation in haploid cells. Crotonylation marks active promoters and enhancers and confers resistance to transcriptional repressors. It is also associated with post-meiotically activated genes on autosomes. In terms of processing, hydroxybutyrylation of histones is induced by starvation. Post-translationally, lactylated in macrophages by EP300/P300 by using lactoyl-CoA directly derived from endogenous or exogenous lactate, leading to stimulates gene transcription.

The protein resides in the nucleus. Its subcellular location is the chromosome. Functionally, core component of nucleosome. Nucleosomes wrap and compact DNA into chromatin, limiting DNA accessibility to the cellular machineries which require DNA as a template. Histones thereby play a central role in transcription regulation, DNA repair, DNA replication and chromosomal stability. DNA accessibility is regulated via a complex set of post-translational modifications of histones, also called histone code, and nucleosome remodeling. The sequence is that of Histone H2B type 1-P (Hist1h2bp) from Mus musculus (Mouse).